A 204-amino-acid chain; its full sequence is Outer-membrane lipoprotein carrier protein (204 aa).

The signal sequence occupies residues 1–21 (MKKIAIVGALLTSFVASSVWA). The segment at 169 to 204 (QRSSYQLKSQQNGAIDASKFTFTPPQGVTVDDQRNK) is disordered. Polar residues predominate over residues 171-181 (SSYQLKSQQNG).

The protein belongs to the LolA family. Monomer.

It is found in the periplasm. Participates in the translocation of lipoproteins from the inner membrane to the outer membrane. Only forms a complex with a lipoprotein if the residue after the N-terminal Cys is not an aspartate (The Asp acts as a targeting signal to indicate that the lipoprotein should stay in the inner membrane). The chain is Outer-membrane lipoprotein carrier protein from Enterobacter sp. (strain 638).